A 279-amino-acid chain; its full sequence is Phosphate-binding protein PstS (279 aa).

Residues 1–18 (MKKVIILIFMLSTSLLYN) form the signal peptide. A lipid anchor (N-palmitoyl cysteine) is attached at Cys-19. Cys-19 is lipidated: S-diacylglycerol cysteine. Phosphate is bound by residues 33–35 (STT), Ser-63, and 151–153 (SGS).

Belongs to the PstS family. In terms of assembly, monomer (in vitro). The complex is composed of two ATP-binding proteins (PstB), two transmembrane proteins (PstC and PstA) and a solute-binding protein (PstS).

The protein localises to the cell membrane. Functionally, binds inorganic phosphate with a Kd of 1.2 uM. Part of the ABC transporter complex PstSACB involved in phosphate import. The polypeptide is Phosphate-binding protein PstS (Borreliella burgdorferi (strain ATCC 35210 / DSM 4680 / CIP 102532 / B31) (Borrelia burgdorferi)).